Consider the following 76-residue polypeptide: Conopeptide X11.1 (76 aa).

The signal sequence occupies residues 1 to 20 (MMKLSVSFLLLLMLLPFITG). Residues 21–39 (EENSDSDVLKSGAAVRQGR) constitute a propeptide that is removed on maturation. Intrachain disulfides connect C42–C56, C49–C61, C55–C66, and C60–C73.

As to expression, expressed by the venom duct.

The protein localises to the secreted. In terms of biological role, antimicrobial peptide that potently inhibits growth of Mycobacterium tuberculosis (H37Rv strain) (MIC=3 uM). The protein is Conopeptide X11.1 of Conasprella ximenes (Interrupted cone).